The primary structure comprises 308 residues: Aspartate carbamoyltransferase catalytic subunit (308 aa).

2 residues coordinate carbamoyl phosphate: Arg55 and Thr56. Lys83 contacts L-aspartate. 3 residues coordinate carbamoyl phosphate: Arg105, His133, and Gln136. Residues Arg166 and Arg223 each contribute to the L-aspartate site. The carbamoyl phosphate site is built by Gly264 and Pro265.

Belongs to the aspartate/ornithine carbamoyltransferase superfamily. ATCase family. As to quaternary structure, heterododecamer (2C3:3R2) of six catalytic PyrB chains organized as two trimers (C3), and six regulatory PyrI chains organized as three dimers (R2).

The catalysed reaction is carbamoyl phosphate + L-aspartate = N-carbamoyl-L-aspartate + phosphate + H(+). It participates in pyrimidine metabolism; UMP biosynthesis via de novo pathway; (S)-dihydroorotate from bicarbonate: step 2/3. Catalyzes the condensation of carbamoyl phosphate and aspartate to form carbamoyl aspartate and inorganic phosphate, the committed step in the de novo pyrimidine nucleotide biosynthesis pathway. The sequence is that of Aspartate carbamoyltransferase catalytic subunit from Salinispora arenicola (strain CNS-205).